The primary structure comprises 309 residues: (S)-sulfolactate dehydrogenase (309 aa).

Residues 151-152, D171, 231-233, and D257 contribute to the NAD(+) site; these read GI and TAR. The active site involves R233. E262 is an active-site residue. H281 acts as the Proton donor in catalysis. 281 to 284 is an NAD(+) binding site; it reads HIAG.

This sequence belongs to the D-isomer specific 2-hydroxyacid dehydrogenase family.

The catalysed reaction is (2S)-3-sulfolactate + NAD(+) = 3-sulfopyruvate + NADH + H(+). Its function is as follows. Dehydrogenase of the (R,S)-sulfolactate degradation pathway that only acts on the (S)-enantiomer of 3-sulfolactate. Together with ComC, provides a racemase system that converts (2S)-3-sulfolactate to (2R)-3-sulfolactate, which is degraded further by (2R)-sulfolactate sulfo-lyase. Specific for NAD. Also able to form sulfolactate from sulfopyruvate. This Chromohalobacter salexigens (strain ATCC BAA-138 / DSM 3043 / CIP 106854 / NCIMB 13768 / 1H11) protein is (S)-sulfolactate dehydrogenase (slcC).